The chain runs to 782 residues: Protein NEDD1 (782 aa).

WD repeat units lie at residues 1 to 34 (MMSN…GDPC), 41 to 80 (SPGC…LGTV), 90 to 130 (SAEE…CIKK), 133 to 172 (GHTS…RATE), 176 to 216 (PNGQ…PKMS), 220 to 260 (QHSA…SSSC), 262 to 301 (AYEA…QPVT), and 307 to 358 (SNSE…TPSA). 2 disordered regions span residues 350-393 (PLPS…WPSG) and 467-512 (PIFD…EAWG). Composition is skewed to polar residues over residues 352–362 (PSTTPSASQSA), 370–386 (VSAS…TPNR), and 488–498 (SFGSITPTASS). A coiled-coil region spans residues 753–782 (VLSSILENQAEQMKELKLLRKENQELRQRL).

Expressed in root meristematic cells.

It is found in the nucleus envelope. The protein localises to the chromosome. Its subcellular location is the centromere. It localises to the kinetochore. The protein resides in the cytoplasm. It is found in the cytoskeleton. The protein localises to the phragmoplast. Its subcellular location is the microtubule organizing center. Regulates microtubules organization in a centrosome-independent manner. Required for the spindle to be positioned correctly and for the function of gamma-tubulin in organizing phragmoplast microtubules. Component of active gamma-tubulin ring complexes (gamma-TuRCs) associated with cortical microtubules in interphase cells. Mediates gamma-TuRC recruitment to the nucleation sites and is important for determining the ratio of branched to parallel nucleation. May mediate the localization of GCP2 and GCP3 to the nuclear envelope. This chain is Protein NEDD1, found in Arabidopsis thaliana (Mouse-ear cress).